The sequence spans 876 residues: Alanine--tRNA ligase (876 aa).

Zn(2+) contacts are provided by H568, H572, C670, and H674.

It belongs to the class-II aminoacyl-tRNA synthetase family. The cofactor is Zn(2+).

It is found in the cytoplasm. The enzyme catalyses tRNA(Ala) + L-alanine + ATP = L-alanyl-tRNA(Ala) + AMP + diphosphate. Its function is as follows. Catalyzes the attachment of alanine to tRNA(Ala) in a two-step reaction: alanine is first activated by ATP to form Ala-AMP and then transferred to the acceptor end of tRNA(Ala). Also edits incorrectly charged Ser-tRNA(Ala) and Gly-tRNA(Ala) via its editing domain. The sequence is that of Alanine--tRNA ligase from Geotalea uraniireducens (strain Rf4) (Geobacter uraniireducens).